A 282-amino-acid chain; its full sequence is Dihydroorotate dehydrogenase B (NAD(+)), electron transfer subunit homolog (282 aa).

The region spanning 2–100 (GGTALNEIVK…VGPLGNPSEI (99 aa)) is the FAD-binding FR-type domain. Residues Cys-225, Cys-228, and Cys-240 each coordinate [2Fe-2S] cluster.

Belongs to the PyrK family. The cofactor is [2Fe-2S] cluster. Requires FAD as cofactor.

The chain is Dihydroorotate dehydrogenase B (NAD(+)), electron transfer subunit homolog from Thermotoga maritima (strain ATCC 43589 / DSM 3109 / JCM 10099 / NBRC 100826 / MSB8).